Reading from the N-terminus, the 503-residue chain is ATP synthase subunit alpha (503 aa).

170–177 (GDKQTGKT) serves as a coordination point for ATP.

The protein belongs to the ATPase alpha/beta chains family. F-type ATPases have 2 components, CF(1) - the catalytic core - and CF(0) - the membrane proton channel. CF(1) has five subunits: alpha(3), beta(3), gamma(1), delta(1), epsilon(1). CF(0) has three main subunits: a(1), b(2) and c(9-12). The alpha and beta chains form an alternating ring which encloses part of the gamma chain. CF(1) is attached to CF(0) by a central stalk formed by the gamma and epsilon chains, while a peripheral stalk is formed by the delta and b chains.

It localises to the cell inner membrane. It catalyses the reaction ATP + H2O + 4 H(+)(in) = ADP + phosphate + 5 H(+)(out). Functionally, produces ATP from ADP in the presence of a proton gradient across the membrane. The alpha chain is a regulatory subunit. This Helicobacter pylori (strain HPAG1) protein is ATP synthase subunit alpha.